Here is a 138-residue protein sequence, read N- to C-terminus: Acidic phospholipase A2 2 (138 aa).

Residues Met1–Gly16 form the signal peptide. 7 disulfides stabilise this stretch: Cys42/Cys131, Cys44/Cys60, Cys59/Cys111, Cys65/Cys138, Cys66/Cys104, Cys73/Cys97, and Cys91/Cys102. Tyr43, Gly45, and Gly47 together coordinate Ca(2+). The active site involves His63. Asp64 serves as a coordination point for Ca(2+). The active site involves Asp105.

The protein belongs to the phospholipase A2 family. Group II subfamily. D49 sub-subfamily. Ca(2+) serves as cofactor. In terms of tissue distribution, expressed by the venom gland.

The protein resides in the secreted. The catalysed reaction is a 1,2-diacyl-sn-glycero-3-phosphocholine + H2O = a 1-acyl-sn-glycero-3-phosphocholine + a fatty acid + H(+). Its function is as follows. Snake venom phospholipase A2 (PLA2) that displays edema-inducing activities, exhibits indirect hemolytic activity, and inhibits ADP-induced platelet aggregation. PLA2 catalyzes the calcium-dependent hydrolysis of the 2-acyl groups in 3-sn-phosphoglycerides. The protein is Acidic phospholipase A2 2 of Protobothrops mucrosquamatus (Taiwan habu).